Consider the following 163-residue polypeptide: RRM-domain-containing protein ECU01_0840 (163 aa).

An RRM domain is found at 84-163 (CSVKLSNLPL…SLGLSAEIAR (80 aa)).

This chain is RRM-domain-containing protein ECU01_0840, found in Encephalitozoon cuniculi (strain GB-M1) (Microsporidian parasite).